We begin with the raw amino-acid sequence, 25 residues long: Small ribosomal subunit protein eS32 eS32z/eS32y/eS32x/eS32w/eS32v (25 aa).

The interval 1–25 (MRAKWKKKRMRRLKRKRRKMRQRSK) is disordered.

The protein belongs to the eukaryotic ribosomal protein eS32 family. In terms of assembly, component of the small ribosomal subunit (SSU).

The sequence is that of Small ribosomal subunit protein eS32 eS32z/eS32y/eS32x/eS32w/eS32v (RPL41A) from Arabidopsis thaliana (Mouse-ear cress).